We begin with the raw amino-acid sequence, 163 residues long: Cytosolic iron-sulfur assembly component 2B (163 aa).

This sequence belongs to the MIP18 family.

Its subcellular location is the nucleus. It is found in the cytoplasm. The protein resides in the cytoskeleton. It localises to the spindle. Component of the cytosolic iron-sulfur (Fe/S) protein assembly machinery. Required for the maturation of extramitochondrial Fe/S proteins. May play a role in chromosome segregation through establishment of sister chromatid cohesion. The chain is Cytosolic iron-sulfur assembly component 2B from Dictyostelium discoideum (Social amoeba).